The following is a 171-amino-acid chain: Neuronal vesicle trafficking-associated protein 2 (171 aa).

A compositionally biased stretch (polar residues) spans 1–10 (MVKLNSNPSE). The disordered stretch occupies residues 1–21 (MVKLNSNPSEKGTKPPSVEDG). The Cytoplasmic segment spans residues 1-71 (MVKLNSNPSE…FRVPKIAEFT (71 aa)). A helical; Signal-anchor for type II membrane protein membrane pass occupies residues 72 to 92 (VTILVSLALAFLACIVFLVVY). At 93–171 (KAFTYDHSCP…EPKPPKTQGH (79 aa)) the chain is on the lumenal side.

The protein belongs to the NSG family.

The protein localises to the membrane. The protein resides in the golgi apparatus. It is found in the trans-Golgi network membrane. Its subcellular location is the cell projection. It localises to the dendrite. The protein localises to the endosome membrane. The protein resides in the early endosome membrane. It is found in the late endosome membrane. Its subcellular location is the lysosome lumen. It localises to the cytoplasmic vesicle membrane. The protein localises to the golgi stack membrane. The protein resides in the endosome. It is found in the multivesicular body membrane. This is Neuronal vesicle trafficking-associated protein 2 from Homo sapiens (Human).